We begin with the raw amino-acid sequence, 371 residues long: MSKQSPTRKLRQTVYDASLKVMFTLRPERIHGLMNKALGVVDGVAPLNRTMEKIIAVHDDSLSQEVFGVTFPRPLGLAAGFDKNASMADAWGAVGFGYAELGTVTASPQPGNPTPRLFRLPADKAILNRMGFNNLGAAEVATNLSNRKSTDVIGINIGKTKVVPAEHAVDDYRRSASLLGDLADYLVVNVSSPNTPGLRDLQAVESLRPILAAVQESTTVPVLVKIAPDLSDEDIDAVADLAVELKLAGIVATNTTISREGLNTPAGEVEAMGAGGISGAPVAARSLEVLKRLYARVGKEMVLISVGGISTPEQAWERITSGATLLQGYTPFIYGGPDWIRDIHLGIAKQLKAHGLRNIADAVGSELEWKN.

FMN contacts are provided by residues Ala-79–Lys-83 and Thr-103. Lys-83 contacts substrate. Residue Asn-128–Phe-132 participates in substrate binding. The FMN site is built by Asn-156 and Asn-189. Residue Asn-189 coordinates substrate. Residue Ser-192 is the Nucleophile of the active site. A substrate-binding site is contributed by Asn-194. FMN is bound by residues Lys-225 and Thr-253. Residue Asn-254–Thr-255 coordinates substrate. FMN-binding positions include Gly-279, Gly-308, and Tyr-329–Thr-330.

The protein belongs to the dihydroorotate dehydrogenase family. Type 2 subfamily. Monomer. Requires FMN as cofactor.

The protein localises to the cell membrane. The enzyme catalyses (S)-dihydroorotate + a quinone = orotate + a quinol. The protein operates within pyrimidine metabolism; UMP biosynthesis via de novo pathway; orotate from (S)-dihydroorotate (quinone route): step 1/1. In terms of biological role, catalyzes the conversion of dihydroorotate to orotate with quinone as electron acceptor. The chain is Dihydroorotate dehydrogenase (quinone) from Corynebacterium glutamicum (strain R).